Consider the following 395-residue polypeptide: Phosphoglycerate kinase (395 aa).

Residues 21 to 23 (DLN), Arg36, 59 to 62 (HLGR), Arg113, and Arg146 contribute to the substrate site. Residues Lys197, Glu324, and 350–353 (GGDT) contribute to the ATP site.

Belongs to the phosphoglycerate kinase family. In terms of assembly, monomer.

It localises to the cytoplasm. The enzyme catalyses (2R)-3-phosphoglycerate + ATP = (2R)-3-phospho-glyceroyl phosphate + ADP. It participates in carbohydrate degradation; glycolysis; pyruvate from D-glyceraldehyde 3-phosphate: step 2/5. This chain is Phosphoglycerate kinase, found in Acinetobacter baylyi (strain ATCC 33305 / BD413 / ADP1).